Consider the following 183-residue polypeptide: Putative 3-methyladenine DNA glycosylase (183 aa).

It belongs to the DNA glycosylase MPG family.

This Wolbachia pipientis subsp. Culex pipiens (strain wPip) protein is Putative 3-methyladenine DNA glycosylase.